We begin with the raw amino-acid sequence, 462 residues long: Probable DNA-directed RNA polymerase subunit 343L (462 aa).

Belongs to the RNA polymerase beta' chain family.

It carries out the reaction RNA(n) + a ribonucleoside 5'-triphosphate = RNA(n+1) + diphosphate. Its function is as follows. Component of the DNA-dependent RNA polymerase that catalyzes the transcription in the cytoplasm of viral DNA into RNA using the four ribonucleoside triphosphates as substrates. The polypeptide is Probable DNA-directed RNA polymerase subunit 343L (Acheta domesticus (House cricket)).